The chain runs to 327 residues: Malate dehydrogenase 1 (327 aa).

NAD(+) is bound at residue 12 to 18 (GAAGQIA). Substrate is bound by residues arginine 93 and arginine 99. NAD(+) contacts are provided by residues asparagine 106, glutamine 113, and 130–132 (VGN). Substrate contacts are provided by asparagine 132 and arginine 163. Histidine 188 serves as the catalytic Proton acceptor.

The protein belongs to the LDH/MDH superfamily. MDH type 2 family.

It carries out the reaction (S)-malate + NAD(+) = oxaloacetate + NADH + H(+). Functionally, catalyzes the reversible oxidation of malate to oxaloacetate. The protein is Malate dehydrogenase 1 of Burkholderia thailandensis (strain ATCC 700388 / DSM 13276 / CCUG 48851 / CIP 106301 / E264).